The chain runs to 69 residues: DNA-directed RNA polymerase subunit omega (69 aa).

Belongs to the RNA polymerase subunit omega family. As to quaternary structure, the RNAP catalytic core consists of 2 alpha, 1 beta, 1 beta' and 1 omega subunit. When a sigma factor is associated with the core the holoenzyme is formed, which can initiate transcription.

The catalysed reaction is RNA(n) + a ribonucleoside 5'-triphosphate = RNA(n+1) + diphosphate. Functionally, promotes RNA polymerase assembly. Latches the N- and C-terminal regions of the beta' subunit thereby facilitating its interaction with the beta and alpha subunits. The polypeptide is DNA-directed RNA polymerase subunit omega (Exiguobacterium sp. (strain ATCC BAA-1283 / AT1b)).